Consider the following 147-residue polypeptide: 3-dehydroquinate dehydratase (147 aa).

The active-site Proton acceptor is the tyrosine 24. Positions 73, 79, and 86 each coordinate substrate. Histidine 99 functions as the Proton donor in the catalytic mechanism. Substrate-binding positions include 100–101 and arginine 110; that span reads LS.

It belongs to the type-II 3-dehydroquinase family. Homododecamer.

It catalyses the reaction 3-dehydroquinate = 3-dehydroshikimate + H2O. Its pathway is metabolic intermediate biosynthesis; chorismate biosynthesis; chorismate from D-erythrose 4-phosphate and phosphoenolpyruvate: step 3/7. Its function is as follows. Catalyzes a trans-dehydration via an enolate intermediate. The polypeptide is 3-dehydroquinate dehydratase (Hyphomonas neptunium (strain ATCC 15444)).